The primary structure comprises 544 residues: MNMSKTTISVKLKIIDLSSEKKEFLDNYFNEYAKATTFCQLRIRRLLRNTHWLGKKEKSSKKWIFESGICDLCGENKELVNEDRNSGEPAKICKRCYNGRYGNQMIRKLFVSTKKREVQENMDIRRVAKLNNTHYHRIPEEAFDMIKAADTAEKRRKKNVEYDKKRQMEFIEMFNDEKKRAARPKKPNERETRYVHISKLESPSKGYTLNGIKRKIDGMGKKIERAEKGLSRKKIFGYQGNRIKLDSNWVRFDLAESEITIPSLFKEMKLRITGPTNVHSKSGQIYFAEWFERINKQPNNYCYLIRKTSSNGKYEYYLQYTYEAEVEANKEYAGCLGVDIGCSKLAAAVYYDSKNKKAQKPIEIFTNPIKKIKMRREKLIKLLSRVKVRHRRRKLMQLSKTEPIIDYTCHKTARKIVEMANTAKAFISMENLETGIKQKQQARETKKQKFYRNMFLFRKLSKLIEYKALLKGIKIVYVKPDYTSQTCSSCGADKEKTERPSQAIFRCLNPTCRYYQRDINADFNAAVNIAKKALNNTEVVTTLL.

The segment at 1–195 is recognition domain (REC); sequence MNMSKTTISV…KPNERETRYV (195 aa). Positions 196 to 326 are wedge domain (WED); it reads HISKLESPSK…YLQYTYEAEV (131 aa). The linker stretch occupies residues 327 to 334; that stretch reads EANKEYAG. A ruvC-I region spans residues 335–485; that stretch reads CLGVDIGCSK…VYVKPDYTSQ (151 aa). Active-site residues include Asp-339 and Glu-430. The interval 486–520 is target nucleic acid-binding (TNB); the sequence is TCSSCGADKEKTERPSQAIFRCLNPTCRYYQRDIN. Zn(2+)-binding residues include Cys-487, Cys-490, Cys-507, and Cys-512. The segment at 521–541 is ruvC-II; the sequence is ADFNAAVNIAKKALNNTEVVT. Asp-522 is an active-site residue.

Belongs to the CRISPR-associated endonuclease Cas12f family. An asymmetric homodimer. Guide RNA is probably required for dimerization. Mg(2+) serves as cofactor. Requires Zn(2+) as cofactor.

Its function is as follows. CRISPR (clustered regularly interspaced short palindromic repeat), is an adaptive immune system that provides protection against mobile genetic elements (viruses, transposable elements and conjugative plasmids). CRISPR clusters contain sequences complementary to antecedent mobile elements and target invading nucleic acids. CRISPR clusters are transcribed and processed into CRISPR RNA (crRNA), which requires a trans-encoded small RNA (tracrRNA), but not this protein (in vitro). Recognizes a short motif in the CRISPR repeat sequences (the 5' PAM or protospacer adjacent motif, TTAT in this organism) to help distinguish self versus nonself, as targets within the CRISPR locus do not have PAMs. Upon expression in E.coli of this protein, a mini CRISPR array and the probable tracrRNA, has dsDNA endonuclease activity. DNA cleavage is centered around positions 21 base pairs 3' of PAM. The mini system does not protect E.coli against transformation by foreign plasmids. The protein is CRISPR-associated endodeoxyribonuclease Cas12f2 of Micrarchaeota archaeon (strain CG1_02_47_40).